The sequence spans 1342 residues: Putative aldehyde oxidase-like protein (1342 aa).

A disordered region spans residues 1-23 (MSDCNSGGGERRPNARATDAPPV). The 188-residue stretch at 221 to 408 (ISSPREGWYC…LSIFIPHWAS (188 aa)) folds into the FAD-binding PCMH-type domain.

Belongs to the xanthine dehydrogenase family.

This Oryza sativa subsp. japonica (Rice) protein is Putative aldehyde oxidase-like protein.